Consider the following 644-residue polypeptide: Ribonuclease R (644 aa).

The RNB domain occupies 211 to 529 (RINYSHIPFI…LHRLLKELLF (319 aa)). Positions 573–644 (LEFLEKEFLG…ITERIKEHVS (72 aa)) constitute an S1 motif domain.

Belongs to the RNR ribonuclease family. RNase R subfamily.

It is found in the cytoplasm. The catalysed reaction is Exonucleolytic cleavage in the 3'- to 5'-direction to yield nucleoside 5'-phosphates.. Functionally, 3'-5' exoribonuclease that releases 5'-nucleoside monophosphates and is involved in maturation of structured RNAs. The protein is Ribonuclease R of Helicobacter pylori (strain J99 / ATCC 700824) (Campylobacter pylori J99).